The chain runs to 857 residues: Protein STICHEL-like 2 (857 aa).

280–287 (GPRGTGKT) serves as a coordination point for ATP. Residues Cys-299, Cys-309, Cys-312, and Cys-315 each contribute to the Zn(2+) site. Positions 544-576 (LTRHTSEEEMQKLRNALKILSDAEKHLRASKNQ) form a coiled coil. Disordered regions lie at residues 593–629 (SSFA…DAEK) and 787–845 (ASSR…SSRL). Positions 599 to 610 (ENGRNQINKDVE) are enriched in basic and acidic residues. Residues 834-843 (QSETQNSKSS) show a composition bias toward polar residues.

It belongs to the DnaX/STICHEL family.

The protein is Protein STICHEL-like 2 of Arabidopsis thaliana (Mouse-ear cress).